A 232-amino-acid polypeptide reads, in one-letter code: Putative N-acetylmannosamine-6-phosphate 2-epimerase (232 aa).

It belongs to the NanE family.

The catalysed reaction is an N-acyl-D-glucosamine 6-phosphate = an N-acyl-D-mannosamine 6-phosphate. Its pathway is amino-sugar metabolism; N-acetylneuraminate degradation; D-fructose 6-phosphate from N-acetylneuraminate: step 3/5. Converts N-acetylmannosamine-6-phosphate (ManNAc-6-P) to N-acetylglucosamine-6-phosphate (GlcNAc-6-P). The sequence is that of Putative N-acetylmannosamine-6-phosphate 2-epimerase from Synechococcus elongatus (strain ATCC 33912 / PCC 7942 / FACHB-805) (Anacystis nidulans R2).